The sequence spans 258 residues: tRNA pseudouridine synthase A (258 aa).

Asp-52 serves as the catalytic Nucleophile. Residue Tyr-110 coordinates substrate.

The protein belongs to the tRNA pseudouridine synthase TruA family. Homodimer.

It carries out the reaction uridine(38/39/40) in tRNA = pseudouridine(38/39/40) in tRNA. In terms of biological role, formation of pseudouridine at positions 38, 39 and 40 in the anticodon stem and loop of transfer RNAs. The sequence is that of tRNA pseudouridine synthase A from Francisella tularensis subsp. holarctica (strain FTNF002-00 / FTA).